The primary structure comprises 969 residues: RNA polymerase-associated protein RapA (969 aa).

A Helicase ATP-binding domain is found at 164–334 (EVGRRHAPRV…FARLRLLDPD (171 aa)). Position 177 to 184 (177 to 184 (DEVGLGKT)) interacts with ATP. The DEAH box motif lies at 280-283 (DEAH). One can recognise a Helicase C-terminal domain in the interval 492 to 679 (RVNWLIEKIQ…ESAKLNQSLK (188 aa)).

The protein belongs to the SNF2/RAD54 helicase family. RapA subfamily. In terms of assembly, interacts with the RNAP. Has a higher affinity for the core RNAP than for the holoenzyme. Its ATPase activity is stimulated by binding to RNAP.

Functionally, transcription regulator that activates transcription by stimulating RNA polymerase (RNAP) recycling in case of stress conditions such as supercoiled DNA or high salt concentrations. Probably acts by releasing the RNAP, when it is trapped or immobilized on tightly supercoiled DNA. Does not activate transcription on linear DNA. Probably not involved in DNA repair. This chain is RNA polymerase-associated protein RapA, found in Vibrio atlanticus (strain LGP32) (Vibrio splendidus (strain Mel32)).